Consider the following 30-residue polypeptide: Protein Tat (30 aa).

Residues 1–30 (PLPTTRGNPTGPKESKKEVESKTETDPFAW) are disordered. The short motif at 6–8 (RGN) is the Cell attachment site element. Residues 13-30 (KESKKEVESKTETDPFAW) show a composition bias toward basic and acidic residues.

It belongs to the lentiviruses Tat family. In terms of assembly, interacts with host CCNT1. Associates with the P-TEFb complex composed at least of Tat, P-TEFb (CDK9 and CCNT1), TAR RNA, RNA Pol II. Recruits the HATs CREBBP, TAF1/TFIID, EP300, PCAF and GCN5L2. Interacts with host KAT5/Tip60; this interaction targets the latter to degradation. Interacts with the host deacetylase SIRT1. Interacts with host capping enzyme RNGTT; this interaction stimulates RNGTT. Binds to host KDR, and to the host integrins ITGAV/ITGB3 and ITGA5/ITGB1. Interacts with host KPNB1/importin beta-1 without previous binding to KPNA1/importin alpha-1. Interacts with EIF2AK2. Interacts with host nucleosome assembly protein NAP1L1; this interaction may be required for the transport of Tat within the nucleus, since the two proteins interact at the nuclear rim. Interacts with host C1QBP/SF2P32; this interaction involves lysine-acetylated Tat. Interacts with the host chemokine receptors CCR2, CCR3 and CXCR4. Interacts with host DPP4/CD26; this interaction may trigger an anti-proliferative effect. Interacts with host LDLR. Interacts with the host extracellular matrix metalloproteinase MMP1. Interacts with host PRMT6; this interaction mediates Tat's methylation. Interacts with, and is ubiquitinated by MDM2/Hdm2. Interacts with host PSMC3 and HTATIP2. Interacts with STAB1; this interaction may overcome SATB1-mediated repression of IL2 and IL2RA (interleukin) in T cells by binding to the same domain than HDAC1. Interacts (when acetylated on Lys-50 and Lys-51) with human CDK13, thereby increasing HIV-1 mRNA splicing and promoting the production of the doubly spliced HIV-1 protein Nef. In terms of processing, acetylation by EP300, CREBBP, GCN5L2/GCN5 and PCAF regulates the transactivation activity of Tat. EP300-mediated acetylation of Lys-50 promotes dissociation of Tat from the TAR RNA through the competitive binding to PCAF's bromodomain. In addition, the non-acetylated Tat's N-terminus can also interact with PCAF. PCAF-mediated acetylation of Lys-28 enhances Tat's binding to CCNT1. Lys-50 is deacetylated by SIRT1. Post-translationally, phosphorylated by EIF2AK2 on serine and threonine residues adjacent to the basic region important for TAR RNA binding and function. Phosphorylation of Tat by EIF2AK2 is dependent on the prior activation of EIF2AK2 by dsRNA. Asymmetrical arginine methylation by host PRMT6 seems to diminish the transactivation capacity of Tat and affects the interaction with host CCNT1. In terms of processing, polyubiquitination by MDM2 does not target Tat to degradation, but activates its transactivation function and fosters interaction with CCNT1 and TAR RNA.

Its subcellular location is the host nucleus. The protein localises to the host nucleolus. It localises to the host cytoplasm. The protein resides in the secreted. Functionally, transcriptional activator that increases RNA Pol II processivity, thereby increasing the level of full-length viral transcripts. Recognizes a hairpin structure at the 5'-LTR of the nascent viral mRNAs referred to as the transactivation responsive RNA element (TAR) and recruits the cyclin T1-CDK9 complex (P-TEFb complex) that will in turn hyperphosphorylate the RNA polymerase II to allow efficient elongation. The CDK9 component of P-TEFb and other Tat-activated kinases hyperphosphorylate the C-terminus of RNA Pol II that becomes stabilized and much more processive. Other factors such as HTATSF1/Tat-SF1, SUPT5H/SPT5, and HTATIP2 are also important for Tat's function. Besides its effect on RNA Pol II processivity, Tat induces chromatin remodeling of proviral genes by recruiting the histone acetyltransferases (HATs) CREBBP, EP300 and PCAF to the chromatin. This also contributes to the increase in proviral transcription rate, especially when the provirus integrates in transcriptionally silent region of the host genome. To ensure maximal activation of the LTR, Tat mediates nuclear translocation of NF-kappa-B by interacting with host RELA. Through its interaction with host TBP, Tat may also modulate transcription initiation. Tat can reactivate a latently infected cell by penetrating in it and transactivating its LTR promoter. In the cytoplasm, Tat is thought to act as a translational activator of HIV-1 mRNAs. In terms of biological role, extracellular circulating Tat can be endocytosed by surrounding uninfected cells via the binding to several surface receptors such as CD26, CXCR4, heparan sulfate proteoglycans (HSPG) or LDLR. Neurons are rarely infected, but they internalize Tat via their LDLR. Endosomal low pH allows Tat to cross the endosome membrane to enter the cytosol and eventually further translocate into the nucleus, thereby inducing severe cell dysfunctions ranging from cell activation to cell death. Through its interaction with nuclear HATs, Tat is potentially able to control the acetylation-dependent cellular gene expression. Tat seems to inhibit the HAT activity of KAT5/Tip60 and TAF1, and consequently modify the expression of specific cellular genes. Modulates the expression of many cellular genes involved in cell survival, proliferation or in coding for cytokines (such as IL10) or cytokine receptors. May be involved in the derepression of host interleukin IL2 expression. Mediates the activation of cyclin-dependent kinases and dysregulation of microtubule network. Tat plays a role in T-cell and neurons apoptosis. Tat induced neurotoxicity and apoptosis probably contribute to neuroAIDS. Host extracellular matrix metalloproteinase MMP1 cleaves Tat and decreases Tat's mediated neurotoxicity. Circulating Tat also acts as a chemokine-like and/or growth factor-like molecule that binds to specific receptors on the surface of the cells, affecting many cellular pathways. In the vascular system, Tat binds to ITGAV/ITGB3 and ITGA5/ITGB1 integrins dimers at the surface of endothelial cells and competes with bFGF for heparin-binding sites, leading to an excess of soluble bFGF. Binds to KDR/VEGFR-2. All these Tat-mediated effects enhance angiogenesis in Kaposi's sarcoma lesions. This is Protein Tat from Human immunodeficiency virus type 1 group M subtype A (isolate Z321) (HIV-1).